We begin with the raw amino-acid sequence, 111 residues long: Cytochrome b-c1 complex subunit 7 (111 aa).

Ala-2 bears the N-acetylalanine mark. At Lys-19 the chain carries N6-acetyllysine. The residue at position 78 (Lys-78) is an N6-acetyllysine; alternate. Position 78 is an N6-succinyllysine; alternate (Lys-78). Lys-83 is modified (N6-acetyllysine). An N6-acetyllysine; alternate modification is found at Lys-88. Lys-88 carries the post-translational modification N6-succinyllysine; alternate. Residue Lys-96 is modified to N6-acetyllysine.

The protein belongs to the UQCRB/QCR7 family. In terms of assembly, component of the ubiquinol-cytochrome c oxidoreductase (cytochrome b-c1 complex, complex III, CIII), a multisubunit enzyme composed of 11 subunits. The complex is composed of 3 respiratory subunits cytochrome b, cytochrome c1 and Rieske protein UQCRFS1, 2 core protein subunits UQCRC1/QCR1 and UQCRC2/QCR2, and 6 low-molecular weight protein subunits UQCRH/QCR6, UQCRB/QCR7, UQCRQ/QCR8, UQCR10/QCR9, UQCR11/QCR10 and subunit 9, the cleavage product of Rieske protein UQCRFS1. The complex exists as an obligatory dimer and forms supercomplexes (SCs) in the inner mitochondrial membrane with NADH-ubiquinone oxidoreductase (complex I, CI) and cytochrome c oxidase (complex IV, CIV), resulting in different assemblies (supercomplex SCI(1)III(2)IV(1) and megacomplex MCI(2)III(2)IV(2)).

The protein resides in the mitochondrion inner membrane. Component of the ubiquinol-cytochrome c oxidoreductase, a multisubunit transmembrane complex that is part of the mitochondrial electron transport chain which drives oxidative phosphorylation. The respiratory chain contains 3 multisubunit complexes succinate dehydrogenase (complex II, CII), ubiquinol-cytochrome c oxidoreductase (cytochrome b-c1 complex, complex III, CIII) and cytochrome c oxidase (complex IV, CIV), that cooperate to transfer electrons derived from NADH and succinate to molecular oxygen, creating an electrochemical gradient over the inner membrane that drives transmembrane transport and the ATP synthase. The cytochrome b-c1 complex catalyzes electron transfer from ubiquinol to cytochrome c, linking this redox reaction to translocation of protons across the mitochondrial inner membrane, with protons being carried across the membrane as hydrogens on the quinol. In the process called Q cycle, 2 protons are consumed from the matrix, 4 protons are released into the intermembrane space and 2 electrons are passed to cytochrome c. The sequence is that of Cytochrome b-c1 complex subunit 7 (UQCRB) from Bos taurus (Bovine).